The sequence spans 504 residues: Multidrug efflux pump LfrA (504 aa).

Transmembrane regions (helical) follow at residues 19–39 (WVAL…NTVL), 58–78 (LWIV…MGSL), 87–107 (LLLI…FAPS), 110–130 (LLVG…PSTL), 145–165 (LAIA…PIVG), 172–192 (FHWG…LVLG), 206–226 (PFDP…VWAV), 233–253 (GLSA…ALFV), 275–295 (TSSI…IFFI), 309–329 (TAGL…LAVV), 338–358 (DTLM…ILLF), 361–381 (NLTV…VGVS), 408–428 (AYEL…TAFY), and 480–500 (IAPT…VVGV).

The protein belongs to the major facilitator superfamily.

It localises to the cell inner membrane. Its activity is regulated as follows. Inhibited by the protonophore carbonyl cyanide m-chorophenylhydrazone (CCCP). Ethidium bromide efflux is inhibited by chlorpromazine, thioridazine and verapamil. Its function is as follows. Energy-dependent efflux pump that contributes to drug resistance. Catalyzes the efflux of norfloxacin and several related fluoroquinolones (FQ). Contributes significantly to the intrinsic MICs for ethidium bromide and acriflavine. Overexpression confers low-level resistance to hydrophilic FQ such as ciprofloxacin, ofloxacin and levofloxacin, and to ethidium bromide, acridine, acriflavine, rhodamine 123 and some quaternary ammonium compounds. May contribute to resistance to certain beta-lactams. Probably uses the proton motive force to export drugs. This is Multidrug efflux pump LfrA from Mycolicibacterium smegmatis (strain ATCC 700084 / mc(2)155) (Mycobacterium smegmatis).